Reading from the N-terminus, the 500-residue chain is Lysine--tRNA ligase (500 aa).

2 residues coordinate Mg(2+): Asp-412 and Glu-419.

This sequence belongs to the class-II aminoacyl-tRNA synthetase family. In terms of assembly, homodimer. Mg(2+) serves as cofactor.

It is found in the cytoplasm. It carries out the reaction tRNA(Lys) + L-lysine + ATP = L-lysyl-tRNA(Lys) + AMP + diphosphate. This chain is Lysine--tRNA ligase, found in Kineococcus radiotolerans (strain ATCC BAA-149 / DSM 14245 / SRS30216).